The primary structure comprises 399 residues: PCI domain-containing protein 2 (399 aa).

Alanine 2 is modified (N-acetylalanine). A Phosphoserine modification is found at serine 45. The 182-residue stretch at 210 to 391 (ITYKYYVGRK…QKLVVSKQNP (182 aa)) folds into the PCI domain.

The protein belongs to the CSN12 family. As to quaternary structure, component of the nuclear pore complex (NPC)-associated TREX-2 complex (transcription and export complex 2), composed of at least GANP, 2 copies of ENY2, PCID2, SEM1/DSS1, and either centrin CETN2 or centrin CETN3. The TREX-2 complex also associates with ALYREF/ALY and with the nucleoporin NUP153. Interacts with BRCA2. Interacts with SRCAP chromatin remodeling complex component ZNHIT1; the interaction results in inhibition of SRCAP complex activity, preventing the deposition of histone variant H2AZ1/H2A.Z to lymphoid fate regulator genes and restricting lymphoid lineage commitment. In terms of tissue distribution, highly expressed in bone marrow and haematopoietic progenitor cells but is almost undetectable in mature blood cells.

It is found in the cytoplasm. The protein resides in the nucleus. The protein localises to the nuclear pore complex. In terms of biological role, required for B-cell survival through the regulation of the expression of cell-cycle checkpoint MAD2L1 protein during B cell differentiation. As a component of the TREX-2 complex, involved in the export of mRNAs to the cytoplasm through the nuclear pores. Binds and stabilizes BRCA2 and is thus involved in the control of R-loop-associated DNA damage and transcription-associated genomic instability. Blocks the activity of the SRCAP chromatin remodeling complex by interacting with SRCAP complex member ZNHIT1 and inhibiting its interaction with the complex. This prevents the deposition of histone variant H2AZ1/H2A.Z at the nucleosomes of key lymphoid fate regulator genes which suppresses their expression and restricts lymphoid lineage commitment. The protein is PCI domain-containing protein 2 (Pcid2) of Mus musculus (Mouse).